The sequence spans 90 residues: Probable Fe(2+)-trafficking protein (90 aa).

The protein belongs to the Fe(2+)-trafficking protein family.

Functionally, could be a mediator in iron transactions between iron acquisition and iron-requiring processes, such as synthesis and/or repair of Fe-S clusters in biosynthetic enzymes. In Pseudomonas aeruginosa (strain UCBPP-PA14), this protein is Probable Fe(2+)-trafficking protein.